The following is a 731-amino-acid chain: 1,4-alpha-glucan branching enzyme GlgB (731 aa).

Asp409 acts as the Nucleophile in catalysis. Residue Glu462 is the Proton donor of the active site.

This sequence belongs to the glycosyl hydrolase 13 family. GlgB subfamily. Monomer.

It catalyses the reaction Transfers a segment of a (1-&gt;4)-alpha-D-glucan chain to a primary hydroxy group in a similar glucan chain.. The protein operates within glycan biosynthesis; glycogen biosynthesis. In terms of biological role, catalyzes the formation of the alpha-1,6-glucosidic linkages in glycogen by scission of a 1,4-alpha-linked oligosaccharide from growing alpha-1,4-glucan chains and the subsequent attachment of the oligosaccharide to the alpha-1,6 position. The sequence is that of 1,4-alpha-glucan branching enzyme GlgB from Roseobacter denitrificans (strain ATCC 33942 / OCh 114) (Erythrobacter sp. (strain OCh 114)).